The primary structure comprises 640 residues: Serine/threonine-protein kinase ELM1 (640 aa).

The tract at residues 27–47 (ELDSPPITPTSQTSSFGSSFS) is disordered. A compositionally biased stretch (low complexity) spans 35–47 (PTSQTSSFGSSFS). The Protein kinase domain occupies 88 to 420 (YTLGVSAGSG…PIDSRNHSQI (333 aa)). ATP is bound by residues 94-102 (AGSGQFGYV) and Lys-117. A Phosphoserine modification is found at Ser-152. Asp-259 serves as the catalytic Proton acceptor. Residues Ser-516 and Ser-519 each carry the phosphoserine modification. The segment covering 520–529 (LPNLTVNNDK) has biased composition (polar residues). Disordered stretches follow at residues 520-547 (LPNL…HSSL) and 562-587 (SPKE…MDRT). Residues 530 to 541 (QNSDMKTDRSES) are compositionally biased toward basic and acidic residues. The segment covering 569–579 (RTHINCSQDKP) has biased composition (polar residues).

The protein belongs to the protein kinase superfamily. Ser/Thr protein kinase family. The cofactor is Mg(2+).

The catalysed reaction is L-seryl-[protein] + ATP = O-phospho-L-seryl-[protein] + ADP + H(+). It catalyses the reaction L-threonyl-[protein] + ATP = O-phospho-L-threonyl-[protein] + ADP + H(+). Its function is as follows. Important role in G1 events required for bud emergence and septin organization. Coordinates cell growth and cell division at G2/M, essential for efficient cytokinesis and for regulation of SWE1. The protein is Serine/threonine-protein kinase ELM1 (ELM1) of Saccharomyces cerevisiae (strain ATCC 204508 / S288c) (Baker's yeast).